A 360-amino-acid chain; its full sequence is Serine/threonine-protein kinase SAPK4 (360 aa).

The region spanning 4–260 is the Protein kinase domain; it reads YEAVRDIGSG…MKEIKSHPWF (257 aa). Residues 10–18 and Lys33 each bind ATP; that span reads IGSGNFGVA. Asp123 serves as the catalytic Proton acceptor. The interval 303–360 is disordered; it reads TMPKSSRTGYWSDAGSDEEEKEEEERPEENEEEEEDEYDKRVKEVHASGELRMSSLRI. The span at 317–339 shows a compositional bias: acidic residues; sequence GSDEEEKEEEERPEENEEEEEDE. The span at 340-351 shows a compositional bias: basic and acidic residues; sequence YDKRVKEVHASG.

It belongs to the protein kinase superfamily. Ser/Thr protein kinase family. Post-translationally, may be phosphorylated. In terms of tissue distribution, expressed in leaf blades, leaf sheaths and roots. Expressed in shoots and roots of young seedlings.

It catalyses the reaction L-seryl-[protein] + ATP = O-phospho-L-seryl-[protein] + ADP + H(+). It carries out the reaction L-threonyl-[protein] + ATP = O-phospho-L-threonyl-[protein] + ADP + H(+). With respect to regulation, activated by hyperosmotic stress. May play a role in signal transduction of hyperosmotic response. The chain is Serine/threonine-protein kinase SAPK4 (SAPK4) from Oryza sativa subsp. japonica (Rice).